The chain runs to 170 residues: Calcineurin subunit B type 2 (170 aa).

Gly2 carries the N-myristoyl glycine lipid modification. EF-hand domains lie at 18–46 (DEIK…FTSM), 50–85 (QENP…FSVR), 87–122 (DEEQ…MVGD), and 128–163 (QLQQ…LEIH). 10 residues coordinate Ca(2+): Asp63, Asp65, Asp67, Gln69, Glu74, Asp100, Asp102, Asp104, Tyr106, and Glu111. The tract at residues 131–136 (QLVDKT) is calcineurin A binding. Asp141, Asp143, Asp145, Lys147, and Glu152 together coordinate Ca(2+).

This sequence belongs to the calcineurin regulatory subunit family. Forms a complex composed of a calmodulin-dependent catalytic subunit (also known as calcineurin A) and a regulatory Ca(2+)-binding subunit (also known as calcineurin B). There are three catalytic subunits, each encoded by a separate gene (PPP3CA, PPP3CB, and PPP3CC) and two regulatory subunits which are also encoded by separate genes (PPP3R1 and PPP3R2). Interacts with SPATA33 (via PQIIIT motif).

Its subcellular location is the mitochondrion. Regulatory subunit of calcineurin, a calcium-dependent, calmodulin stimulated protein phosphatase. Confers calcium sensitivity. The polypeptide is Calcineurin subunit B type 2 (PPP3R2) (Bos taurus (Bovine)).